We begin with the raw amino-acid sequence, 144 residues long: Large ribosomal subunit protein uL15 (144 aa).

The interval 1–52 is disordered; that stretch reads MRLNTLSPAEGAKHAPKRVGRGIGSGLGKTAGRGHKGQNSRSGGGVRRGFEG. Gly residues predominate over residues 21–31; that stretch reads RGIGSGLGKTA.

Belongs to the universal ribosomal protein uL15 family. Part of the 50S ribosomal subunit.

In terms of biological role, binds to the 23S rRNA. The chain is Large ribosomal subunit protein uL15 from Yersinia enterocolitica serotype O:8 / biotype 1B (strain NCTC 13174 / 8081).